The primary structure comprises 520 residues: 2-isopropylmalate synthase (520 aa).

Positions 5–268 (VYIFDTTLRD…YTDVNTKEIY (264 aa)) constitute a Pyruvate carboxyltransferase domain. 4 residues coordinate Mn(2+): D14, H202, H204, and N238. The segment at 394–520 (KVLHFQVQSG…RQEIREEGTV (127 aa)) is regulatory domain.

It belongs to the alpha-IPM synthase/homocitrate synthase family. LeuA type 1 subfamily. As to quaternary structure, homodimer. Requires Mn(2+) as cofactor.

It is found in the cytoplasm. It carries out the reaction 3-methyl-2-oxobutanoate + acetyl-CoA + H2O = (2S)-2-isopropylmalate + CoA + H(+). Its pathway is amino-acid biosynthesis; L-leucine biosynthesis; L-leucine from 3-methyl-2-oxobutanoate: step 1/4. In terms of biological role, catalyzes the condensation of the acetyl group of acetyl-CoA with 3-methyl-2-oxobutanoate (2-ketoisovalerate) to form 3-carboxy-3-hydroxy-4-methylpentanoate (2-isopropylmalate). The polypeptide is 2-isopropylmalate synthase (Aquifex aeolicus (strain VF5)).